Here is a 209-residue protein sequence, read N- to C-terminus: Uracil phosphoribosyltransferase (209 aa).

5-phospho-alpha-D-ribose 1-diphosphate-binding positions include arginine 79, arginine 104, and 131-139 (DPMLATGGS). Uracil is bound by residues isoleucine 194 and 199–201 (GDA). Aspartate 200 serves as a coordination point for 5-phospho-alpha-D-ribose 1-diphosphate.

Belongs to the UPRTase family. Mg(2+) serves as cofactor.

It carries out the reaction UMP + diphosphate = 5-phospho-alpha-D-ribose 1-diphosphate + uracil. It functions in the pathway pyrimidine metabolism; UMP biosynthesis via salvage pathway; UMP from uracil: step 1/1. Its activity is regulated as follows. Allosterically activated by GTP. Functionally, catalyzes the conversion of uracil and 5-phospho-alpha-D-ribose 1-diphosphate (PRPP) to UMP and diphosphate. The polypeptide is Uracil phosphoribosyltransferase (Clostridium perfringens (strain SM101 / Type A)).